The chain runs to 170 residues: Ubiquitin-conjugating enzyme E2 G1 (170 aa).

An N-acetylmethionine modification is found at Met-1. The residue at position 2 (Thr-2) is an N-acetylthreonine; in Ubiquitin-conjugating enzyme E2 G1, N-terminally processed. The region spanning 5-166 (QSALLLRRQL…VARCVRKSQE (162 aa)) is the UBC core domain. Cys-90 acts as the Glycyl thioester intermediate in catalysis.

The protein belongs to the ubiquitin-conjugating enzyme family. In terms of processing, autoubiquitinated.

It carries out the reaction S-ubiquitinyl-[E1 ubiquitin-activating enzyme]-L-cysteine + [E2 ubiquitin-conjugating enzyme]-L-cysteine = [E1 ubiquitin-activating enzyme]-L-cysteine + S-ubiquitinyl-[E2 ubiquitin-conjugating enzyme]-L-cysteine.. It functions in the pathway protein modification; protein ubiquitination. In terms of biological role, accepts ubiquitin from the E1 complex and catalyzes its covalent attachment to other proteins. In vitro catalyzes 'Lys-48'-, as well as 'Lys-63'-linked polyubiquitination. May be involved in degradation of muscle-specific proteins. Mediates polyubiquitination of CYP3A4. This Macaca fascicularis (Crab-eating macaque) protein is Ubiquitin-conjugating enzyme E2 G1 (UBE2G1).